A 238-amino-acid chain; its full sequence is MRPSGRQPDQLRPVTLTRKFTRHAEGSVLVCFGDTQVLCTASVLPKVPPHKKGSGEGWVTAEYGMLPRSTHTRSDREAARGKQSGRTQEIQRLIGRAMRTVFDLRALGEHTLHLDCDVLQADGGTRTASITGAFVAAYDAVSVMREKGQLVGDPVRDFVAAVSVGVVDGVPVLDLDYPEDSACDTDMNVVMTGSGGFVEVQGTAEGTPFSRAEMDAMLGLADQGIRTLISLQKQALGL.

Positions 66–88 (LPRSTHTRSDREAARGKQSGRTQ) are disordered. Phosphate contacts are provided by residues arginine 86 and 124-126 (GTR).

This sequence belongs to the RNase PH family. As to quaternary structure, homohexameric ring arranged as a trimer of dimers.

The enzyme catalyses tRNA(n+1) + phosphate = tRNA(n) + a ribonucleoside 5'-diphosphate. Phosphorolytic 3'-5' exoribonuclease that plays an important role in tRNA 3'-end maturation. Removes nucleotide residues following the 3'-CCA terminus of tRNAs; can also add nucleotides to the ends of RNA molecules by using nucleoside diphosphates as substrates, but this may not be physiologically important. Probably plays a role in initiation of 16S rRNA degradation (leading to ribosome degradation) during starvation. This Ralstonia pickettii (strain 12J) protein is Ribonuclease PH.